The primary structure comprises 740 residues: NAD(P)H-quinone oxidoreductase subunit 5, chloroplastic (740 aa).

16 helical membrane-spanning segments follow: residues 9–29 (WIIP…LFLF), 40–60 (WAFQ…YLSI), 89–109 (IDPL…MVLI), 125–145 (FAYM…SNLI), 147–167 (IYIF…FWFT), 185–205 (GDFG…SFEF), 219–239 (NEVD…GAVA), 258–278 (TPIS…FLVA), 286–306 (VIPY…LLGA), 327–347 (LGYM…FHLI), 354–374 (ALLF…VGYS), 396–416 (ITFL…CFWS), 425–445 (WLYS…TAFY), 543–563 (LFPI…GIPF), 602–622 (VLSV…YKPI), and 717–737 (SYLF…YLLF).

The protein belongs to the complex I subunit 5 family. In terms of assembly, NDH is composed of at least 16 different subunits, 5 of which are encoded in the nucleus.

The protein localises to the plastid. It is found in the chloroplast thylakoid membrane. The catalysed reaction is a plastoquinone + NADH + (n+1) H(+)(in) = a plastoquinol + NAD(+) + n H(+)(out). The enzyme catalyses a plastoquinone + NADPH + (n+1) H(+)(in) = a plastoquinol + NADP(+) + n H(+)(out). In terms of biological role, NDH shuttles electrons from NAD(P)H:plastoquinone, via FMN and iron-sulfur (Fe-S) centers, to quinones in the photosynthetic chain and possibly in a chloroplast respiratory chain. The immediate electron acceptor for the enzyme in this species is believed to be plastoquinone. Couples the redox reaction to proton translocation, and thus conserves the redox energy in a proton gradient. This Nicotiana tabacum (Common tobacco) protein is NAD(P)H-quinone oxidoreductase subunit 5, chloroplastic (ndhF).